The chain runs to 1374 residues: DNA-directed RNA polymerase subunit beta' (1374 aa).

The tract at residues 1–47 (MTSTSPKSRKPSTKTTKSKSKSKSKSKAAKAAAASASPALARTPPQF) is disordered. The segment covering 7–28 (KSRKPSTKTTKSKSKSKSKSKA) has biased composition (basic residues). Residues 29-45 (AKAAAASASPALARTPP) are compositionally biased toward low complexity. Zn(2+)-binding residues include Cys258, Cys325, Cys332, and Cys335. The tract at residues 1343-1374 (VRPTGENELEEEQLPDPSALEGLQQEGLLTEE) is disordered. The segment covering 1362–1374 (LEGLQQEGLLTEE) has biased composition (low complexity).

It belongs to the RNA polymerase beta' chain family. RpoC2 subfamily. In cyanobacteria the RNAP catalytic core is composed of 2 alpha, 1 beta, 1 beta', 1 gamma and 1 omega subunit. When a sigma factor is associated with the core the holoenzyme is formed, which can initiate transcription. The cofactor is Zn(2+).

The enzyme catalyses RNA(n) + a ribonucleoside 5'-triphosphate = RNA(n+1) + diphosphate. DNA-dependent RNA polymerase catalyzes the transcription of DNA into RNA using the four ribonucleoside triphosphates as substrates. In Prochlorococcus marinus (strain MIT 9303), this protein is DNA-directed RNA polymerase subunit beta'.